Here is a 205-residue protein sequence, read N- to C-terminus: Small ribosomal subunit protein uS4 (205 aa).

Positions 1 to 16 (MSKRESSKYKIDRRMG) are enriched in basic and acidic residues. Positions 1–46 (MSKRESSKYKIDRRMGENIWGRPKSPVNRREYGPGQHGQRRKGKLS) are disordered. The S4 RNA-binding domain occupies 94–157 (SRLDAIVYRA…KQLVTVLEAV (64 aa)).

It belongs to the universal ribosomal protein uS4 family. Part of the 30S ribosomal subunit. Contacts protein S5. The interaction surface between S4 and S5 is involved in control of translational fidelity.

Functionally, one of the primary rRNA binding proteins, it binds directly to 16S rRNA where it nucleates assembly of the body of the 30S subunit. In terms of biological role, with S5 and S12 plays an important role in translational accuracy. This Rhizobium etli (strain ATCC 51251 / DSM 11541 / JCM 21823 / NBRC 15573 / CFN 42) protein is Small ribosomal subunit protein uS4.